Reading from the N-terminus, the 318-residue chain is Probable serine/threonine-protein kinase MRK1 homolog (318 aa).

One can recognise a Protein kinase domain in the interval 40–313 (YRYVEMIGRG…ASELLRKQFF (274 aa)). Residues 46–54 (IGRGSFGVV) and lysine 68 contribute to the ATP site. Residue aspartate 159 is the Proton acceptor of the active site.

This sequence belongs to the protein kinase superfamily. CMGC Ser/Thr protein kinase family. GSK-3 subfamily.

It localises to the cytoplasm. The protein resides in the nucleus. It catalyses the reaction L-seryl-[protein] + ATP = O-phospho-L-seryl-[protein] + ADP + H(+). The catalysed reaction is L-threonyl-[protein] + ATP = O-phospho-L-threonyl-[protein] + ADP + H(+). In terms of biological role, may play a role in the initiation and completion of mitosis. The chain is Probable serine/threonine-protein kinase MRK1 homolog (MRK1) from Encephalitozoon cuniculi (strain GB-M1) (Microsporidian parasite).